Reading from the N-terminus, the 148-residue chain is 3-hydroxyacyl-[acyl-carrier-protein] dehydratase FabZ (148 aa).

His55 is an active-site residue.

It belongs to the thioester dehydratase family. FabZ subfamily.

It is found in the cytoplasm. The enzyme catalyses a (3R)-hydroxyacyl-[ACP] = a (2E)-enoyl-[ACP] + H2O. Involved in unsaturated fatty acids biosynthesis. Catalyzes the dehydration of short chain beta-hydroxyacyl-ACPs and long chain saturated and unsaturated beta-hydroxyacyl-ACPs. The polypeptide is 3-hydroxyacyl-[acyl-carrier-protein] dehydratase FabZ (Haemophilus influenzae (strain PittEE)).